The primary structure comprises 4870 residues: Malformin synthetase mlfA (4870 aa).

The segment at 106 to 497 (ERRAANRPHS…CGRADTQVKL (392 aa)) is adenylation 1. The 77-residue stretch at 635–711 (LGLSQLEQEI…EASSLAEVQE (77 aa)) folds into the Carrier 1 domain. An O-(pantetheine 4'-phosphoryl)serine modification is found at Ser672. A condensation 1 region spans residues 749 to 1133 (EDVFPCTTMQ…ALNTLTLLQA (385 aa)). Residues 1161 to 1550 (DRWVTRQPES…GRKDTQVKLR (390 aa)) form an adenylation 2 region. Residues 1688 to 1765 (TASSKLELTL…QLAAILGEAT (78 aa)) enclose the Carrier 2 domain. Ser1725 carries the post-translational modification O-(pantetheine 4'-phosphoryl)serine. Disordered stretches follow at residues 1764–1794 (ATGQPESSASSTTEEGFTFSTPDDSSTNDGV) and 1829–1859 (GSSSCKTPSVSSSSSSSSSRKKKSAKVVSPV). 2 stretches are compositionally biased toward low complexity: residues 1769 to 1792 (ESSASSTTEEGFTFSTPDDSSTND) and 1830 to 1846 (SSSCKTPSVSSSSSSSS). The interval 1898 to 2313 (EDIYPATALQ…GVSYRDKQTL (416 aa)) is condensation 2. The adenylation 3 stretch occupies residues 2336–2728 (VRTPHAPAVF…IGRRDGQLKL (393 aa)). In terms of domain architecture, Carrier 3 spans 2864-2940 (RPATAQEREM…QLMRHLSANG (77 aa)). The residue at position 2901 (Ser2901) is an O-(pantetheine 4'-phosphoryl)serine. 2 condensation regions span residues 2957-3422 (WVPL…TYDQ) and 3443-3862 (DIYP…EQLV). The interval 3887 to 4277 (HSSREAACAW…VGRKDNQIKF (391 aa)) is adenylation 4. In terms of domain architecture, Carrier 4 spans 4411 to 4487 (MPFTAAECKM…DLAYRTANLV (77 aa)). Position 4448 is an O-(pantetheine 4'-phosphoryl)serine (Ser4448). The segment at 4524-4837 (EVLPTTSFQR…LQTIVQHQNN (314 aa)) is condensation 5.

It belongs to the NRP synthetase family.

The protein operates within secondary metabolite biosynthesis. In terms of biological role, nonribosomal peptide synthetase; part of the gene cluster that mediates the biosynthesis of malformins, cyclic pentapeptides with a disulfide bond between 2 consecutive cysteins, that show potential anti-tumor as well as antimalarial and antitrypanosomal properties. The nonribosomal peptide synthetase mlfA is responsible of the formation of the cyclic pentapeptide. The malformin biosynthesis clusters in malformin-producing fungi also contain enzymes involved in the formation of the disulfide bond between the two consecutive cysteins within malformins, in addition to additional tailoring enzymes such as methyltransferases or oxidoreductases. They are also composed of up to 4 major facilitator superfamily transporters, and transcription factors probably involved in the regulation of the expression of those clusters. The protein is Malformin synthetase mlfA of Aspergillus niger (strain ATCC 1015 / CBS 113.46 / FGSC A1144 / LSHB Ac4 / NCTC 3858a / NRRL 328 / USDA 3528.7).